A 232-amino-acid chain; its full sequence is 5'-methylthioadenosine/S-adenosylhomocysteine nucleosidase (232 aa).

Glutamate 14 functions as the Proton acceptor in the catalytic mechanism. Substrate is bound by residues glycine 80, valine 154, and 175 to 176 (ME). Catalysis depends on aspartate 199, which acts as the Proton donor.

Belongs to the PNP/UDP phosphorylase family. MtnN subfamily.

It carries out the reaction S-adenosyl-L-homocysteine + H2O = S-(5-deoxy-D-ribos-5-yl)-L-homocysteine + adenine. The enzyme catalyses S-methyl-5'-thioadenosine + H2O = 5-(methylsulfanyl)-D-ribose + adenine. The catalysed reaction is 5'-deoxyadenosine + H2O = 5-deoxy-D-ribose + adenine. It participates in amino-acid biosynthesis; L-methionine biosynthesis via salvage pathway; S-methyl-5-thio-alpha-D-ribose 1-phosphate from S-methyl-5'-thioadenosine (hydrolase route): step 1/2. In terms of biological role, catalyzes the irreversible cleavage of the glycosidic bond in both 5'-methylthioadenosine (MTA) and S-adenosylhomocysteine (SAH/AdoHcy) to adenine and the corresponding thioribose, 5'-methylthioribose and S-ribosylhomocysteine, respectively. Also cleaves 5'-deoxyadenosine, a toxic by-product of radical S-adenosylmethionine (SAM) enzymes, into 5-deoxyribose and adenine. The polypeptide is 5'-methylthioadenosine/S-adenosylhomocysteine nucleosidase (Actinobacillus pleuropneumoniae serotype 5b (strain L20)).